Here is a 324-residue protein sequence, read N- to C-terminus: Serpentine receptor class delta-30 (324 aa).

The next 7 helical transmembrane spans lie at 5–25 (IIHS…MYLA), 38–58 (AIIT…FFVM), 83–103 (ACYV…IWMI), 124–144 (VFVA…WFSF), 176–196 (ITLI…YIWI), 227–247 (FQVF…SMFT), and 258–278 (AISV…ILFV). The segment at 290 to 324 (KQPKPHPEMCGPIRSNTRTTSISVTNNSSHLSSAH) is disordered. Polar residues predominate over residues 303 to 324 (RSNTRTTSISVTNNSSHLSSAH).

It belongs to the nematode receptor-like protein srd family.

It localises to the membrane. The polypeptide is Serpentine receptor class delta-30 (srd-30) (Caenorhabditis elegans).